A 518-amino-acid chain; its full sequence is Chaperonin GroEL (518 aa).

Residues 30 to 33, lysine 51, 87 to 91, and glycine 415 each bind ATP; these read TLGP and DGTTT.

It belongs to the chaperonin (HSP60) family. In terms of assembly, forms a cylinder of 14 subunits composed of two heptameric rings stacked back-to-back. Interacts with the co-chaperonin GroES.

It is found in the cytoplasm. The catalysed reaction is ATP + H2O + a folded polypeptide = ADP + phosphate + an unfolded polypeptide.. Together with its co-chaperonin GroES, plays an essential role in assisting protein folding. The GroEL-GroES system forms a nano-cage that allows encapsulation of the non-native substrate proteins and provides a physical environment optimized to promote and accelerate protein folding. The polypeptide is Chaperonin GroEL (Desulfotalea psychrophila (strain LSv54 / DSM 12343)).